The chain runs to 192 residues: Urease accessory protein UreE (192 aa).

The interval 170–192 (EHHGHSHSHSHDHVHDEKCGHKH) is disordered. The segment covering 178 to 192 (HSHDHVHDEKCGHKH) has biased composition (basic and acidic residues).

The protein belongs to the UreE family.

It localises to the cytoplasm. Involved in urease metallocenter assembly. Binds nickel. Probably functions as a nickel donor during metallocenter assembly. This chain is Urease accessory protein UreE, found in Cupriavidus necator (strain ATCC 17699 / DSM 428 / KCTC 22496 / NCIMB 10442 / H16 / Stanier 337) (Ralstonia eutropha).